We begin with the raw amino-acid sequence, 196 residues long: Heat shock protein beta-8 (196 aa).

Residues Ser24 and Ser57 each carry the phosphoserine modification. Thr63 bears the Phosphothreonine; by PKC; in vitro mark. An asymmetric dimethylarginine mark is found at Arg71 and Arg78. Positions 74-185 constitute a sHSP domain; sequence TATARFGVPA…TFGESSFNNE (112 aa). Residues 176-196 form a disordered region; sequence TFGESSFNNELPQDSQEVTCT. A compositionally biased stretch (polar residues) spans 177-196; that stretch reads FGESSFNNELPQDSQEVTCT.

This sequence belongs to the small heat shock protein (HSP20) family. Monomer. Forms a ternary complex with BAG3 and HSPA1A. Component of the chaperone-assisted selective autophagy (CASA) complex consisting of BAG3, HSPA8/HSC70, HSPB8 and STUB1/CHIP. Interacts with HSPB1. Interacts with DNAJB6. Interacts with BAG3. Predominantly expressed in skeletal muscle and heart.

The protein localises to the cytoplasm. The protein resides in the nucleus. In terms of biological role, involved in the chaperone-assisted selective autophagy (CASA), a crucial process for protein quality control, particularly in mechanical strained cells and tissues such as muscle. Displays temperature-dependent chaperone activity. The protein is Heat shock protein beta-8 (HSPB8) of Homo sapiens (Human).